Here is a 228-residue protein sequence, read N- to C-terminus: Thiamine-phosphate synthase (228 aa).

Residues 57–61 and Asn-89 each bind 4-amino-2-methyl-5-(diphosphooxymethyl)pyrimidine; that span reads QLRDK. Residues Asp-90 and Asp-109 each contribute to the Mg(2+) site. Ser-128 lines the 4-amino-2-methyl-5-(diphosphooxymethyl)pyrimidine pocket. 154 to 156 provides a ligand contact to 2-[(2R,5Z)-2-carboxy-4-methylthiazol-5(2H)-ylidene]ethyl phosphate; sequence TPS. Residue Lys-157 coordinates 4-amino-2-methyl-5-(diphosphooxymethyl)pyrimidine. Residues Gly-185 and 205 to 206 each bind 2-[(2R,5Z)-2-carboxy-4-methylthiazol-5(2H)-ylidene]ethyl phosphate; that span reads IS.

The protein belongs to the thiamine-phosphate synthase family. Requires Mg(2+) as cofactor.

The catalysed reaction is 2-[(2R,5Z)-2-carboxy-4-methylthiazol-5(2H)-ylidene]ethyl phosphate + 4-amino-2-methyl-5-(diphosphooxymethyl)pyrimidine + 2 H(+) = thiamine phosphate + CO2 + diphosphate. The enzyme catalyses 2-(2-carboxy-4-methylthiazol-5-yl)ethyl phosphate + 4-amino-2-methyl-5-(diphosphooxymethyl)pyrimidine + 2 H(+) = thiamine phosphate + CO2 + diphosphate. It carries out the reaction 4-methyl-5-(2-phosphooxyethyl)-thiazole + 4-amino-2-methyl-5-(diphosphooxymethyl)pyrimidine + H(+) = thiamine phosphate + diphosphate. Its pathway is cofactor biosynthesis; thiamine diphosphate biosynthesis; thiamine phosphate from 4-amino-2-methyl-5-diphosphomethylpyrimidine and 4-methyl-5-(2-phosphoethyl)-thiazole: step 1/1. In terms of biological role, condenses 4-methyl-5-(beta-hydroxyethyl)thiazole monophosphate (THZ-P) and 2-methyl-4-amino-5-hydroxymethyl pyrimidine pyrophosphate (HMP-PP) to form thiamine monophosphate (TMP). The polypeptide is Thiamine-phosphate synthase (Roseiflexus castenholzii (strain DSM 13941 / HLO8)).